Here is a 576-residue protein sequence, read N- to C-terminus: M-phase inducer phosphatase 2 (576 aa).

Position 42 is a phosphoserine (serine 42). Positions 90–105 (RRTSECSLSSESSESS) are enriched in low complexity. Residues 90–119 (RRTSECSLSSESSESSDAGLCMDSPSPVDP) are disordered. Phosphoserine; by MELK is present on serine 167. Serine 248 is subject to Phosphoserine. Serine 321 is modified (phosphoserine; by MELK and MAPK14). The interval 338-358 (QDRDVPVQSKRRKSVTPLEEQ) is disordered. A Phosphoserine; by AURKA modification is found at serine 351. The residue at position 372 (serine 372) is a Phosphoserine; by BRSK1 and MAPK14. Residues 427–534 (IVEKFVIVDC…FFPQHPNFCE (108 aa)) form the Rhodanese domain. Residue cysteine 483 is part of the active site. At serine 559 the chain carries Phosphoserine.

Belongs to the MPI phosphatase family. In terms of assembly, interacts with MAPK14 and 14-3-3 proteins. Post-translationally, phosphorylated by BRSK1 in vitro. Phosphorylated by CHEK1, which inhibits the activity of this protein. Phosphorylation at Ser-351 by AURKA might locally participate in the control of the onset of mitosis. Phosphorylation by MELK at Ser-167 promotes localization to the centrosome and the spindle poles during mitosis. Phosphorylation at Ser-321 and Ser-372 by MAPK14 is required for binding to 14-3-3 proteins. Expressed predominantly in spleen, lung, heart, brain, intestine, and muscle.

The protein resides in the cytoplasm. It is found in the cytoskeleton. It localises to the microtubule organizing center. Its subcellular location is the centrosome. The protein localises to the spindle pole. It catalyses the reaction O-phospho-L-tyrosyl-[protein] + H2O = L-tyrosyl-[protein] + phosphate. Stimulated by B-type cyclins. In terms of biological role, tyrosine protein phosphatase which functions as a dosage-dependent inducer of mitotic progression. Directly dephosphorylates CDK1 and stimulates its kinase activity. Required for G2/M phases of the cell cycle progression and abscission during cytokinesis in a ECT2-dependent manner. The three isoforms seem to have a different level of activity. This is M-phase inducer phosphatase 2 (Cdc25b) from Mus musculus (Mouse).